Here is a 391-residue protein sequence, read N- to C-terminus: MRITGIIAEYNPLHNGHIYQLQQARQQSQADLVIVCMSGNYVQRGQAALLDKWTRAELALQNGADMVVELPFVSAVQPADRFATGAVQLLAALGCQTIAFGSEQPTFDYQQAGQQIIDLPEQSAAFVDYQKTYATQLNEFYQEQLSLQIDQPNHLLGISYAVANARLAQPLNLLAIKREQAQHGDQTVSTAPYASASAIRQVVTQGTALAALQHVVPAGTLAALADSTLLTEDQLWPLLKYRIESLSLAQLRQVYQMSEGLEYRFKKVIHKANSYTELLQALKTKRYTYARLQRVCLYVLLNIQPADIQQGLQRTYIRLLGFNEIGQQHLHQLKKTTDLPIISKVSAKMGAETGLLGLEVRVDRLCEQFGWQSQNFARQPIFYHGKDEAHC.

ATP-binding positions include 7-20 (IAEY…HIYQ), Gly101, Asn153, and Arg178.

Belongs to the TmcAL family.

The protein resides in the cytoplasm. It carries out the reaction cytidine(34) in elongator tRNA(Met) + acetate + ATP = N(4)-acetylcytidine(34) in elongator tRNA(Met) + AMP + diphosphate. Catalyzes the formation of N(4)-acetylcytidine (ac(4)C) at the wobble position of elongator tRNA(Met), using acetate and ATP as substrates. First activates an acetate ion to form acetyladenylate (Ac-AMP) and then transfers the acetyl group to tRNA to form ac(4)C34. In Latilactobacillus sakei subsp. sakei (strain 23K) (Lactobacillus sakei subsp. sakei), this protein is tRNA(Met) cytidine acetate ligase.